Consider the following 626-residue polypeptide: Biosynthetic arginine decarboxylase (626 aa).

Residue Lys-99 is modified to N6-(pyridoxal phosphate)lysine. Substrate is bound at residue 279-289; the sequence is VDVGGGLGVDY.

This sequence belongs to the Orn/Lys/Arg decarboxylase class-II family. SpeA subfamily. Requires Mg(2+) as cofactor. Pyridoxal 5'-phosphate is required as a cofactor.

It catalyses the reaction L-arginine + H(+) = agmatine + CO2. It functions in the pathway amine and polyamine biosynthesis; agmatine biosynthesis; agmatine from L-arginine: step 1/1. Catalyzes the biosynthesis of agmatine from arginine. This Chromobacterium violaceum (strain ATCC 12472 / DSM 30191 / JCM 1249 / CCUG 213 / NBRC 12614 / NCIMB 9131 / NCTC 9757 / MK) protein is Biosynthetic arginine decarboxylase.